The chain runs to 653 residues: Zinc finger CCCH domain-containing protein 54 (653 aa).

Residues 242–261 (NGGGGGGGSPARARRSNGLS) are disordered. A C3H1-type zinc finger spans residues 260–287 (LSTRRPCHYFSKGICKNGQNCHYSHHQV). In terms of domain architecture, HTH OST-type spans 313 to 396 (SLETLEMEIT…GQHSVVLAED (84 aa)). The 76-residue stretch at 422–497 (HQIYLTFPAE…SRVLVKPYRE (76 aa)) folds into the RRM domain. A coiled-coil region spans residues 537–565 (RLMRKQLAEKREMLLEMERRRATVRRLES). The interval 598 to 623 (PSLASPDPLEIVSNSQAPPTQAGNIY) is disordered. A compositionally biased stretch (polar residues) spans 609–620 (VSNSQAPPTQAG).

In Oryza sativa subsp. japonica (Rice), this protein is Zinc finger CCCH domain-containing protein 54.